The sequence spans 730 residues: 1,4-alpha-glucan branching enzyme GlgB (730 aa).

Asp-405 acts as the Nucleophile in catalysis. Glu-458 serves as the catalytic Proton donor.

Belongs to the glycosyl hydrolase 13 family. GlgB subfamily. In terms of assembly, monomer.

The catalysed reaction is Transfers a segment of a (1-&gt;4)-alpha-D-glucan chain to a primary hydroxy group in a similar glucan chain.. It functions in the pathway glycan biosynthesis; glycogen biosynthesis. Its function is as follows. Catalyzes the formation of the alpha-1,6-glucosidic linkages in glycogen by scission of a 1,4-alpha-linked oligosaccharide from growing alpha-1,4-glucan chains and the subsequent attachment of the oligosaccharide to the alpha-1,6 position. The chain is 1,4-alpha-glucan branching enzyme GlgB from Haemophilus influenzae (strain PittGG).